The chain runs to 101 residues: MAKTSMKAREAKRAKLVAKFATKRTELKAIIVDMNASEEARWDAVLQLQQLPRDSSPSRQRNRCNITGRPHGFLRKFGLSRIKVREHAMKGEIPGLKKASW.

Belongs to the universal ribosomal protein uS14 family. In terms of assembly, part of the 30S ribosomal subunit. Contacts proteins S3 and S10.

Functionally, binds 16S rRNA, required for the assembly of 30S particles and may also be responsible for determining the conformation of the 16S rRNA at the A site. The chain is Small ribosomal subunit protein uS14 from Aeromonas salmonicida (strain A449).